A 242-amino-acid chain; its full sequence is Small ribosomal subunit protein uS2 (242 aa).

Belongs to the universal ribosomal protein uS2 family.

The chain is Small ribosomal subunit protein uS2 from Aliivibrio fischeri (strain ATCC 700601 / ES114) (Vibrio fischeri).